Reading from the N-terminus, the 95-residue chain is Cell division topological specificity factor (95 aa).

Belongs to the MinE family.

In terms of biological role, prevents the cell division inhibition by proteins MinC and MinD at internal division sites while permitting inhibition at polar sites. This ensures cell division at the proper site by restricting the formation of a division septum at the midpoint of the long axis of the cell. In Trichodesmium erythraeum (strain IMS101), this protein is Cell division topological specificity factor.